The primary structure comprises 563 residues: Efflux pump notK (563 aa).

The tract at residues 1–32 (MTKDEDSGTTDGGYSTPDIAVQEKQDQPPAPE) is disordered. The next 14 helical transmembrane spans lie at 48–68 (IFLS…AIPG), 78–98 (DVGW…PMWG), 108–128 (LVYL…AAAP), 138–158 (ALQG…ISYV), 165–185 (AMLI…GPLL), 197–217 (WCFW…VLFF), 239–259 (LPGF…LQWG), 270–290 (VIAT…VEWI), 312–332 (LYGW…PIYF), 345–365 (VNSL…GFLI), 374–394 (YEFA…TLDI), 406–426 (VIFG…LESF), 438–458 (VMLM…QSIF), and 509–529 (VFAF…AIPF). The tract at residues 538–563 (GPSNGQEEEEGKKDGPAEKKEDEVAV) is disordered. A compositionally biased stretch (basic and acidic residues) spans 547–563 (EGKKDGPAEKKEDEVAV).

This sequence belongs to the major facilitator superfamily. TCR/Tet family.

It is found in the cell membrane. Its function is as follows. Efflux pump; part of the gene cluster that mediates the biosynthesis of notoamide, a fungal indole alkaloid that belongs to a family of natural products containing a characteristic bicyclo[2.2.2]diazaoctane core. This chain is Efflux pump notK, found in Aspergillus sp. (strain MF297-2).